The following is a 367-amino-acid chain: uncharacterized protein (367 aa).

The protein belongs to the Gfo/Idh/MocA family.

This is an uncharacterized protein from Streptococcus pneumoniae serotype 4 (strain ATCC BAA-334 / TIGR4).